Consider the following 110-residue polypeptide: Flagellar hook-basal body complex protein FliE (110 aa).

It belongs to the FliE family.

It is found in the bacterial flagellum basal body. The sequence is that of Flagellar hook-basal body complex protein FliE from Pseudomonas entomophila (strain L48).